A 363-amino-acid chain; its full sequence is MALKHDWTKEEILEIYNKPFMELLYDAATIHREHHDPNTVQVSTLLSIKTGGCPEDCGYCPQAARYHTDLEGNDLMSVNQVKAQALRAKASGSSRVCMGAAWRNVKDGEEFDNVLEMVRSINKLDMEVCCTLGMLTENQAQRLAEAGLYAYNHNLDSSEEYYKEVISTRGYQDRLDTIGNVRKTNVTVCSGGIIGMGESEADRAGMLVALSTLNPQPESVPINALVPVEGTPMEEQEPVPIWEMIRMVATTRIVMPETQVRLSAGRTQMSREGQAMCFFAGANSIFAGDKLLTTPNPDVSEDMEMFKMLGLNPQKAFEKKSQPESVAAEKSKYQSQGEKPRWSRPEHKIDRNLEAQQNAKTKA.

In terms of domain architecture, Radical SAM core spans 38–266 (NTVQVSTLLS…ETQVRLSAGR (229 aa)). The [4Fe-4S] cluster site is built by Cys53, Cys57, and Cys60. [2Fe-2S] cluster is bound by residues Cys97, Cys129, Cys189, and Arg261. Positions 315-363 (KAFEKKSQPESVAAEKSKYQSQGEKPRWSRPEHKIDRNLEAQQNAKTKA) are disordered. A compositionally biased stretch (basic and acidic residues) spans 316 to 353 (AFEKKSQPESVAAEKSKYQSQGEKPRWSRPEHKIDRNL). Polar residues predominate over residues 354-363 (EAQQNAKTKA).

This sequence belongs to the radical SAM superfamily. Biotin synthase family. In terms of assembly, homodimer. [4Fe-4S] cluster serves as cofactor. [2Fe-2S] cluster is required as a cofactor.

It carries out the reaction (4R,5S)-dethiobiotin + (sulfur carrier)-SH + 2 reduced [2Fe-2S]-[ferredoxin] + 2 S-adenosyl-L-methionine = (sulfur carrier)-H + biotin + 2 5'-deoxyadenosine + 2 L-methionine + 2 oxidized [2Fe-2S]-[ferredoxin]. The protein operates within cofactor biosynthesis; biotin biosynthesis; biotin from 7,8-diaminononanoate: step 2/2. Its function is as follows. Catalyzes the conversion of dethiobiotin (DTB) to biotin by the insertion of a sulfur atom into dethiobiotin via a radical-based mechanism. In Christiangramia forsetii (strain DSM 17595 / CGMCC 1.15422 / KT0803) (Gramella forsetii), this protein is Biotin synthase.